We begin with the raw amino-acid sequence, 622 residues long: Iron transport multicopper oxidase FET5 (622 aa).

The signal sequence occupies residues 1–18; the sequence is MLFYSFVWSVLAASVALA. Over 19–573 the chain is Extracellular; the sequence is KTHKLNYTAS…PKGFTTEGYL (555 aa). Asn-24 is a glycosylation site (N-linked (GlcNAc...) asparagine). Plastocyanin-like domains are found at residues 43-146 and 192-301; these read IGFN…FIIH and NILF…IQMR. The Cu cation site is built by His-79 and His-81. Asn-86 and Asn-115 each carry an N-linked (GlcNAc...) asparagine glycan. Cu cation is bound by residues His-128 and His-130. N-linked (GlcNAc...) asparagine glycosylation is found at Asn-196, Asn-200, Asn-246, Asn-295, and Asn-364. The 123-residue stretch at 392–514 folds into the Plastocyanin-like 3 domain; sequence GDNINAQLLK…QGLASVFIEA (123 aa). Positions 418, 421, and 423 each coordinate Cu cation. A glycan (N-linked (GlcNAc...) asparagine) is linked at Asn-455. Cu cation is bound by residues His-496, Cys-497, His-498, and His-502. Residues 574-594 traverse the membrane as a helical segment; sequence ALIISTIIGVWGLYSIAQYGI. Residues 595–622 lie on the Cytoplasmic side of the membrane; the sequence is GEVIPNDEKVYHTLREILAENEIEVSRG.

This sequence belongs to the multicopper oxidase family. Interacts with FTH1. Requires Cu cation as cofactor.

It localises to the cell membrane. Functionally, iron transport multicopper oxidase, which is required for Fe(2+) high affinity uptake. May be required to oxidize Fe(2+) and release it from the transporter. Essential component of copper-dependent iron transport. In Saccharomyces cerevisiae (strain ATCC 204508 / S288c) (Baker's yeast), this protein is Iron transport multicopper oxidase FET5 (FET5).